Consider the following 674-residue polypeptide: MAPFLRISFNSYELGSLQVEDEASQPFCAVKMKEALSTERGKTLVQKKPTMYPEWKTTFDAHIYEGRVIQIVLMRAAEDPVSEVTVGVSVLAERCKKNNGKAEFWLDLQPQAKVLMCVQYFLEDGDCKQSMRSEEEAKFPTMNRRGAIKQAKIHYIKNHEFIATFFGQPTFCSVCKEFVWGLNKQGYKCRQCNAAIHKKCIDKIIGRCTGTATNSRDTIFQKERFNIDMPHRFKVYNYMSPTFCDHCGSLLWGLVKQGLKCEDCGMNVHHKCREKVANLCGINQKLLAEALNQVTQRSSRKLDTTESVGIYQGFEKKPEVSGSDILDNNGTYGKIWEGSTRCTLENFTFQKVLGKGSFGKVLLAELKGKDKYFAIKCLKKDVVLIDDDVECTMVEKRVLALAWESPFLTHLICTFQTKDHLFFVMEFLNGGDLMFHIQDKGRFELYRATFYAAEIICGLQFLHSKGIIYRDLKLDNVMLDRDGHIKIADFGMCKENIFGEGRASTFCGTPDYIAPEILQGLKYSFSVDWWSFGVLLYEMLIGQSPFHGDDEDELFESIRVDTPHYPRWITKESKDIMEKLFERDPDKRLGVTGNIRIHPFFKTINWSLLEKRKVEPPFKPKVKSPSDYSNFDPEFLNEKPQLSFSDKNLIDSMDQEAFHGFSFVNPKFEQFLDI.

Residues 1 to 106 form the C2 domain; it reads MAPFLRISFN…KNNGKAEFWL (106 aa). Residues Thr-43 and Thr-50 each carry the phosphothreonine modification. Tyr-64 carries the phosphotyrosine modification. At Ser-130 the chain carries Phosphoserine. The residue at position 141 (Thr-141) is a Phosphothreonine. Tyr-155 carries the post-translational modification Phosphotyrosine. Residues 158–208 form a Phorbol-ester/DAG-type 1 zinc finger; the sequence is NHEFIATFFGQPTFCSVCKEFVWGLNKQGYKCRQCNAAIHKKCIDKIIGRC. Thr-218 is modified (phosphothreonine). The segment at 230–280 adopts a Phorbol-ester/DAG-type 2 zinc-finger fold; that stretch reads PHRFKVYNYMSPTFCDHCGSLLWGLVKQGLKCEDCGMNVHHKCREKVANLC. Ser-299 carries the post-translational modification Phosphoserine; by autocatalysis. Residues Tyr-311 and Tyr-332 each carry the phosphotyrosine; by SRC modification. The region spanning 347-601 is the Protein kinase domain; that stretch reads FTFQKVLGKG…TGNIRIHPFF (255 aa). Position 353 to 361 (353 to 361) interacts with ATP; sequence LGKGSFGKV. Position 372 is a phosphotyrosine (Tyr-372). An ATP-binding site is contributed by Lys-376. Position 449 is a phosphothreonine (Thr-449). Asp-471 functions as the Proton acceptor in the catalytic mechanism. Ser-504 bears the Phosphoserine mark. Residue Thr-505 is modified to Phosphothreonine; by autocatalysis. At Tyr-565 the chain carries Phosphotyrosine. Positions 602–673 constitute an AGC-kinase C-terminal domain; sequence KTINWSLLEK…VNPKFEQFLD (72 aa). Residues Ser-643, Ser-652, and Ser-662 each carry the phosphoserine modification.

The protein belongs to the protein kinase superfamily. AGC Ser/Thr protein kinase family. PKC subfamily. Interacts with PDPK1 (via N-terminal region). Interacts with RAD9A. Interacts with CDCP1. Interacts with MUC1. Interacts with VASP. Interacts with CAVIN3. Interacts with PRKD2 (via N-terminus and zing-finger domain 1 and 2) in response to oxidative stress; the interaction is independent of PRKD2 tyrosine phosphorylation. Interacts with PLSC3; interaction is enhanced by UV irradiation. Post-translationally, autophosphorylated and/or phosphorylated at Thr-505, within the activation loop; phosphorylation at Thr-505 is not a prerequisite for enzymatic activity. Autophosphorylated at Ser-299. Upon TNFSF10/TRAIL treatment, phosphorylated at Tyr-155; phosphorylation is required for its translocation to the endoplasmic reticulum and cleavage by caspase-3. Phosphorylated at Tyr-311, Tyr-332 and Tyr-565; phosphorylation of Tyr-311 and Tyr-565 following thrombin or zymosan stimulation potentiates its kinase activity. Phosphorylated by protein kinase PDPK1; phosphorylation is inhibited by the apoptotic C-terminal cleavage product of PKN2. Phosphorylated at Tyr-311 through a SYK and SRC mechanism downstream of C-type lectin receptors activation, promoting its activation. In terms of processing, proteolytically cleaved into a catalytic subunit and a regulatory subunit by caspase-3 during apoptosis which results in kinase activation. Isoform 1 is highly expressed in developing pro- and pre-B-cells and moderately in mature T-cells. Isoform 2 is highly expressed in testis and ovary and at a lower level in thymocytes, brain and kidney.

It is found in the cytoplasm. Its subcellular location is the perinuclear region. It localises to the nucleus. The protein resides in the cell membrane. The protein localises to the mitochondrion. It is found in the endomembrane system. The enzyme catalyses L-seryl-[protein] + ATP = O-phospho-L-seryl-[protein] + ADP + H(+). The catalysed reaction is L-threonyl-[protein] + ATP = O-phospho-L-threonyl-[protein] + ADP + H(+). It catalyses the reaction L-tyrosyl-[protein] + ATP = O-phospho-L-tyrosyl-[protein] + ADP + H(+). Novel PKCs (PRKCD, PRKCE, PRKCH and PRKCQ) are calcium-insensitive, but activated by diacylglycerol (DAG) and phosphatidylserine. Three specific sites; Thr-505 (activation loop of the kinase domain), Ser-643 (turn motif) and Ser-662 (hydrophobic region), need to be phosphorylated for its full activation. Activated by caspase-3 (CASP3) cleavage during apoptosis. After cleavage, the pseudosubstrate motif in the regulatory subunit is released from the substrate recognition site of the catalytic subunit, which enables PRKCD to become constitutively activated. The catalytic subunit which displays properties of a sphingosine-dependent protein kinase is activated by D-erythro-sphingosine (Sph) or N,N-dimethyl-D-erythrosphingosine (DMS) or N,N,N-trimethyl-D-erythrosphingosine (TMS), but not by ceramide or Sph-1-P and is strongly inhibited by phosphatidylserine. Its function is as follows. Calcium-independent, phospholipid- and diacylglycerol (DAG)-dependent serine/threonine-protein kinase that plays contrasting roles in cell death and cell survival by functioning as a pro-apoptotic protein during DNA damage-induced apoptosis, but acting as an anti-apoptotic protein during cytokine receptor-initiated cell death, is involved in tumor suppression, is required for oxygen radical production by NADPH oxidase and acts as a positive or negative regulator in platelet functional responses. Negatively regulates B cell proliferation and also has an important function in self-antigen induced B cell tolerance induction. Upon DNA damage, activates the promoter of the death-promoting transcription factor BCLAF1/Btf to trigger BCLAF1-mediated p53/TP53 gene transcription and apoptosis. In response to oxidative stress, interact with and activate CHUK/IKKA in the nucleus, causing the phosphorylation of p53/TP53. In the case of ER stress or DNA damage-induced apoptosis, can form a complex with the tyrosine-protein kinase ABL1 which trigger apoptosis independently of p53/TP53. In cytosol can trigger apoptosis by activating MAPK11 or MAPK14, inhibiting AKT1 and decreasing the level of X-linked inhibitor of apoptosis protein (XIAP), whereas in nucleus induces apoptosis via the activation of MAPK8 or MAPK9. Upon ionizing radiation treatment, is required for the activation of the apoptosis regulators BAX and BAK, which trigger the mitochondrial cell death pathway. Can phosphorylate MCL1 and target it for degradation which is sufficient to trigger for BAX activation and apoptosis. Is required for the control of cell cycle progression both at G1/S and G2/M phases. Mediates phorbol 12-myristate 13-acetate (PMA)-induced inhibition of cell cycle progression at G1/S phase by up-regulating the CDK inhibitor CDKN1A/p21 and inhibiting the cyclin CCNA2 promoter activity. In response to UV irradiation can phosphorylate CDK1, which is important for the G2/M DNA damage checkpoint activation. Can protect glioma cells from the apoptosis induced by TNFSF10/TRAIL, probably by inducing increased phosphorylation and subsequent activation of AKT1. Can also act as tumor suppressor upon mitogenic stimulation with PMA or TPA. In N-formyl-methionyl-leucyl-phenylalanine (fMLP)-treated cells, is required for NCF1 (p47-phox) phosphorylation and activation of NADPH oxidase activity, and regulates TNF-elicited superoxide anion production in neutrophils, by direct phosphorylation and activation of NCF1 or indirectly through MAPK1/3 (ERK1/2) signaling pathways. Involved in antifungal immunity by mediating phosphorylation and activation of CARD9 downstream of C-type lectin receptors activation, promoting interaction between CARD9 and BCL10, followed by activation of NF-kappa-B and MAP kinase p38 pathways. May also play a role in the regulation of NADPH oxidase activity in eosinophil after stimulation with IL5, leukotriene B4 or PMA. In collagen-induced platelet aggregation, acts a negative regulator of filopodia formation and actin polymerization by interacting with and negatively regulating VASP phosphorylation. Downstream of PAR1, PAR4 and CD36/GP4 receptors, regulates differentially platelet dense granule secretion; acts as a positive regulator in PAR-mediated granule secretion, whereas it negatively regulates CD36/GP4-mediated granule release. Phosphorylates MUC1 in the C-terminal and regulates the interaction between MUC1 and beta-catenin. The catalytic subunit phosphorylates 14-3-3 proteins (YWHAB, YWHAZ and YWHAH) in a sphingosine-dependent fashion. Phosphorylates ELAVL1 in response to angiotensin-2 treatment. Phosphorylates mitochondrial phospholipid scramblase 3 (PLSCR3), resulting in increased cardiolipin expression on the mitochondrial outer membrane which facilitates apoptosis. Phosphorylates SMPD1 which induces SMPD1 secretion. The sequence is that of Protein kinase C delta type from Mus musculus (Mouse).